The sequence spans 152 residues: Urease accessory protein UreE (152 aa).

It belongs to the UreE family.

Its subcellular location is the cytoplasm. In terms of biological role, involved in urease metallocenter assembly. Binds nickel. Probably functions as a nickel donor during metallocenter assembly. This chain is Urease accessory protein UreE, found in Enterobacter sp. (strain 638).